The following is a 239-amino-acid chain: MSLYRDEGVVLRTSKLGEADRIITILTRGHGKIRAVAKGVRRTKSRFGARLEPFMRVDVLIAEGRSLDVVSQAEAVAAYGAPIAADYAAYEAANVIVETIDKIASTEHEQLPNQYRLLIGALNALAKQSHAPQAIGDSYVMRALALAGWTPRLGTCVVCGKAEPAYLSIASGGVMCEADHTTDARRIAPFVLNQFDALIRGDWSVLDAAPVERVVQELVEDWGEYYLERPIRSLRLIDS.

The protein belongs to the RecO family.

In terms of biological role, involved in DNA repair and RecF pathway recombination. In Bifidobacterium longum (strain DJO10A), this protein is DNA repair protein RecO.